Here is a 268-residue protein sequence, read N- to C-terminus: MNTRDPGLAAIPDVQATPDTRRIAIQRVGVKGVRYPLTVKTLSGVQPSVGTWNMYVHLAEEQKGTHMSRFIALLEENTQALDVNVFGGMIRKMLALLEADAGRIEVSFPYFINKTAPVSGVQSLMDYEVGFNGEIKNGKLEITLKVLVPVTSLCPCSKKISAYGAHNQRSHITVQALLADDLVVEELIAQIEAQASCELFGLLKRPDEKYVTERAYDNPKFVEDLVRDVAVMLNNEARVLAYTLEAENFESIHNHSAYALIELDKRLA.

The protein belongs to the GTP cyclohydrolase IV family.

The catalysed reaction is GTP + H2O = 7,8-dihydroneopterin 3'-triphosphate + formate + H(+). Its pathway is cofactor biosynthesis; 7,8-dihydroneopterin triphosphate biosynthesis; 7,8-dihydroneopterin triphosphate from GTP: step 1/1. In terms of biological role, converts GTP to 7,8-dihydroneopterin triphosphate. The sequence is that of GTP cyclohydrolase FolE2 from Janthinobacterium sp. (strain Marseille) (Minibacterium massiliensis).